The chain runs to 452 residues: Probable cysteine protease RD21C (452 aa).

A signal peptide spans 1 to 29 (MATSIKSITLALLIFSVLLISLSLGSVTA). Positions 30–128 (TETTRNEAEA…EKYLYKVGDS (99 aa)) are cleaved as a propeptide — activation peptide. Asn-82 carries N-linked (GlcNAc...) asparagine glycosylation. Disulfide bonds link Cys-150-Cys-192, Cys-184-Cys-226, Cys-284-Cys-335, Cys-363-Cys-375, and Cys-369-Cys-390. Cys-153 is an active-site residue. Active-site residues include His-290 and Asn-310. A propeptide spans 346–452 (KSSGSNPPKP…KSTNMLVGSA (107 aa)) (removed in mature form).

This sequence belongs to the peptidase C1 family. In terms of assembly, interacts with WSCP.

Functionally, probable thiol protease. The polypeptide is Probable cysteine protease RD21C (Arabidopsis thaliana (Mouse-ear cress)).